A 305-amino-acid chain; its full sequence is N-acetylmuramic acid 6-phosphate etherase (305 aa).

One can recognise an SIS domain in the interval Ala-54 to Lys-217. Glu-82 (proton donor) is an active-site residue. Glu-113 is an active-site residue.

It belongs to the GCKR-like family. MurNAc-6-P etherase subfamily. In terms of assembly, homodimer.

It catalyses the reaction N-acetyl-D-muramate 6-phosphate + H2O = N-acetyl-D-glucosamine 6-phosphate + (R)-lactate. It participates in amino-sugar metabolism; N-acetylmuramate degradation. Its function is as follows. Specifically catalyzes the cleavage of the D-lactyl ether substituent of MurNAc 6-phosphate, producing GlcNAc 6-phosphate and D-lactate. This chain is N-acetylmuramic acid 6-phosphate etherase, found in Deinococcus radiodurans (strain ATCC 13939 / DSM 20539 / JCM 16871 / CCUG 27074 / LMG 4051 / NBRC 15346 / NCIMB 9279 / VKM B-1422 / R1).